Here is a 145-residue protein sequence, read N- to C-terminus: Large ribosomal subunit protein uL13 (145 aa).

This sequence belongs to the universal ribosomal protein uL13 family. As to quaternary structure, part of the 50S ribosomal subunit. Interacts weakly with proteins L3 and L6.

Its function is as follows. This protein is one of the early assembly proteins of the 50S ribosomal subunit. Binds to 23S rRNA. The protein is Large ribosomal subunit protein uL13 of Haloarcula marismortui (strain ATCC 43049 / DSM 3752 / JCM 8966 / VKM B-1809) (Halobacterium marismortui).